Consider the following 652-residue polypeptide: DNA ligase (652 aa).

NAD(+) contacts are provided by residues 29 to 33, 78 to 79, and Glu107; these read DSEYD and SL. Lys109 acts as the N6-AMP-lysine intermediate in catalysis. The NAD(+) site is built by Arg130, Glu164, Lys278, and Lys302. Residues Cys395, Cys398, Cys413, and Cys418 each coordinate Zn(2+). The BRCT domain maps to 577–652; the sequence is VADAALSGLT…VRDEAWLESL (76 aa).

Belongs to the NAD-dependent DNA ligase family. LigA subfamily. Mg(2+) is required as a cofactor. Mn(2+) serves as cofactor.

It carries out the reaction NAD(+) + (deoxyribonucleotide)n-3'-hydroxyl + 5'-phospho-(deoxyribonucleotide)m = (deoxyribonucleotide)n+m + AMP + beta-nicotinamide D-nucleotide.. DNA ligase that catalyzes the formation of phosphodiester linkages between 5'-phosphoryl and 3'-hydroxyl groups in double-stranded DNA using NAD as a coenzyme and as the energy source for the reaction. It is essential for DNA replication and repair of damaged DNA. The chain is DNA ligase from Streptococcus pneumoniae serotype 2 (strain D39 / NCTC 7466).